A 254-amino-acid chain; its full sequence is 5-oxoprolinase subunit A (254 aa).

The protein belongs to the LamB/PxpA family. Forms a complex composed of PxpA, PxpB and PxpC.

The catalysed reaction is 5-oxo-L-proline + ATP + 2 H2O = L-glutamate + ADP + phosphate + H(+). Its function is as follows. Catalyzes the cleavage of 5-oxoproline to form L-glutamate coupled to the hydrolysis of ATP to ADP and inorganic phosphate. This Heliobacterium modesticaldum (strain ATCC 51547 / Ice1) protein is 5-oxoprolinase subunit A.